The chain runs to 366 residues: IgG receptor FcRn large subunit p51 (366 aa).

A signal peptide spans 1-22 (MGMSQPGVLLSLLLVLLPQTWG). Residues 23–111 (AEPRLPLMYH…RTLENQINGT (89 aa)) form an alpha-1 region. The Extracellular segment spans residues 23 to 298 (AEPRLPLMYH…VDLDSPARSS (276 aa)). 4 N-linked (GlcNAc...) asparagine glycosylation sites follow: Asn109, Asn126, Asn150, and Asn247. The tract at residues 112–201 (FTLQGLLGCE…ERGRQNLEWK (90 aa)) is alpha-2. Disulfide bonds link Cys120-Cys183 and Cys222-Cys276. Positions 202–291 (EPPSMRLKAR…GLAQPLTVDL (90 aa)) are alpha-3. An Ig-like C1-type domain is found at 203–290 (PPSMRLKARP…EGLAQPLTVD (88 aa)). Residues 293–298 (SPARSS) are connecting peptide. A helical transmembrane segment spans residues 299-322 (VPVVGIILGLLLVVVAIAGGVLLW). Topologically, residues 323-366 (NRMRSGLPAPWLSLSGDDSGDLLPGGNLPPEAEPQGVNAFPATS) are cytoplasmic. Ser335 carries the phosphoserine modification. Residues 344 to 366 (LLPGGNLPPEAEPQGVNAFPATS) are disordered.

It belongs to the immunoglobulin superfamily. As to quaternary structure, fcRn complex consists of two subunits: p51, and p14 which is equivalent to beta-2-microglobulin. It forms an MHC class I-like heterodimer. Interacts with albumin/ALB; this interaction regulates ALB homeostasis. As to expression, intestinal epithelium.

It localises to the cell membrane. Its subcellular location is the endosome membrane. Functionally, cell surface receptor that transfers passive humoral immunity from the mother to the newborn. Binds to the Fc region of monomeric immunoglobulin gamma and mediates its selective uptake from milk. IgG in the milk is bound at the apical surface of the intestinal epithelium. The resultant FcRn-IgG complexes are transcytosed across the intestinal epithelium and IgG is released from FcRn into blood or tissue fluids. Throughout life, contributes to effective humoral immunity by recycling IgG and extending its half-life in the circulation. Mechanistically, monomeric IgG binding to FcRn in acidic endosomes of endothelial and hematopoietic cells recycles IgG to the cell surface where it is released into the circulation. In addition of IgG, regulates homeostasis of the other most abundant circulating protein albumin/ALB. This chain is IgG receptor FcRn large subunit p51 (Fcgrt), found in Rattus norvegicus (Rat).